An 83-amino-acid chain; its full sequence is Small ribosomal subunit protein uS17 (83 aa).

The protein belongs to the universal ribosomal protein uS17 family. In terms of assembly, part of the 30S ribosomal subunit.

One of the primary rRNA binding proteins, it binds specifically to the 5'-end of 16S ribosomal RNA. The polypeptide is Small ribosomal subunit protein uS17 (Synechococcus sp. (strain RCC307)).